Here is a 255-residue protein sequence, read N- to C-terminus: Large ribosomal subunit protein uL4 (255 aa).

It belongs to the universal ribosomal protein uL4 family. As to quaternary structure, part of the 50S ribosomal subunit.

In terms of biological role, one of the primary rRNA binding proteins, this protein initially binds near the 5'-end of the 23S rRNA. It is important during the early stages of 50S assembly. It makes multiple contacts with different domains of the 23S rRNA in the assembled 50S subunit and ribosome. Its function is as follows. Forms part of the polypeptide exit tunnel. This chain is Large ribosomal subunit protein uL4, found in Pyrococcus abyssi (strain GE5 / Orsay).